The sequence spans 71 residues: Small ribosomal subunit protein bS21 (71 aa).

This sequence belongs to the bacterial ribosomal protein bS21 family.

This chain is Small ribosomal subunit protein bS21, found in Acidithiobacillus ferrooxidans (strain ATCC 23270 / DSM 14882 / CIP 104768 / NCIMB 8455) (Ferrobacillus ferrooxidans (strain ATCC 23270)).